The primary structure comprises 277 residues: Thiazole synthase (277 aa).

Lys119 functions as the Schiff-base intermediate with DXP in the catalytic mechanism. Residues Gly180, 206-207, and 228-229 contribute to the 1-deoxy-D-xylulose 5-phosphate site; these read AG and NT.

It belongs to the ThiG family. In terms of assembly, homotetramer. Forms heterodimers with either ThiH or ThiS.

The protein resides in the plastid. Its subcellular location is the chloroplast. The enzyme catalyses [ThiS sulfur-carrier protein]-C-terminal-Gly-aminoethanethioate + 2-iminoacetate + 1-deoxy-D-xylulose 5-phosphate = [ThiS sulfur-carrier protein]-C-terminal Gly-Gly + 2-[(2R,5Z)-2-carboxy-4-methylthiazol-5(2H)-ylidene]ethyl phosphate + 2 H2O + H(+). It functions in the pathway cofactor biosynthesis; thiamine diphosphate biosynthesis. Catalyzes the rearrangement of 1-deoxy-D-xylulose 5-phosphate (DXP) to produce the thiazole phosphate moiety of thiamine. Sulfur is provided by the thiocarboxylate moiety of the carrier protein ThiS. In vitro, sulfur can be provided by H(2)S. The sequence is that of Thiazole synthase from Porphyra purpurea (Red seaweed).